A 301-amino-acid chain; its full sequence is GTPase Era (301 aa).

Residues 6 to 173 enclose the Era-type G domain; sequence KSGFVAIVGR…LEQTNANLEI (168 aa). Residues 14–21 form a G1 region; it reads GRPNVGKS. 14 to 21 is a binding site for GTP; sequence GRPNVGKS. Residues 40-44 are G2; it reads QTTRN. Residues 61–64 are G3; the sequence is DTPG. GTP contacts are provided by residues 61 to 65 and 123 to 126; these read DTPGI and NKID. The tract at residues 123–126 is G4; the sequence is NKID. Residues 152–154 are G5; sequence ISA. The 79-residue stretch at 204–282 folds into the KH type-2 domain; that stretch reads TREEVPHSVA…FLEVWVKVQK (79 aa).

Belongs to the TRAFAC class TrmE-Era-EngA-EngB-Septin-like GTPase superfamily. Era GTPase family. Monomer.

The protein resides in the cytoplasm. It is found in the cell membrane. An essential GTPase that binds both GDP and GTP, with rapid nucleotide exchange. Plays a role in 16S rRNA processing and 30S ribosomal subunit biogenesis and possibly also in cell cycle regulation and energy metabolism. In Listeria monocytogenes serotype 4a (strain HCC23), this protein is GTPase Era.